The primary structure comprises 127 residues: Nitrogenase-stabilizing/protective protein NifW (127 aa).

Belongs to the NifW family. In terms of assembly, homotrimer; associates with NifD.

May protect the nitrogenase Fe-Mo protein from oxidative damage. The polypeptide is Nitrogenase-stabilizing/protective protein NifW (Rhizobium etli (strain ATCC 51251 / DSM 11541 / JCM 21823 / NBRC 15573 / CFN 42)).